Here is a 356-residue protein sequence, read N- to C-terminus: Septin-2A (356 aa).

In terms of domain architecture, Septin-type G spans 33–305 (KGFEFTLMVV…ENFRSERLKK (273 aa)). The segment at 43-50 (GESGLGKS) is G1 motif. Residues 43–50 (GESGLGKS), Thr-77, Gly-103, 182–190 (KADTLTLRE), Gly-240, and Arg-255 contribute to the GTP site. A G3 motif region spans residues 100–103 (DTPG). Residues 181 to 184 (AKAD) form a G4 motif region. The tract at residues 259-269 (WGVVEVENTEH) is important for dimerization.

The protein belongs to the TRAFAC class TrmE-Era-EngA-EngB-Septin-like GTPase superfamily. Septin GTPase family. Septins polymerize into heterooligomeric protein complexes that form filaments, and associate with cellular membranes, actin filaments and microtubules. GTPase activity is required for filament formation. Can form heterooligomers with other family members and form filaments. Interacts with wdpcp.

The protein localises to the cytoplasm. The protein resides in the cytoskeleton. Its subcellular location is the spindle. It is found in the cleavage furrow. It localises to the midbody. The protein localises to the cell projection. The protein resides in the cilium membrane. In terms of biological role, filament-forming cytoskeletal GTPase. Required for normal organization of the actin cytoskeleton. Plays a role in the biogenesis of polarized columnar-shaped epithelium. Required for the progression through mitosis through regulation of chromosome congression. During anaphase, may be required for chromosome segregation and spindle elongation. Probably plays a role in ciliogenesis and collective cell movements including convergent extension during gastrulation. In cilia, required for the integrity of the diffusion barrier at the base of the primary cilium that prevents diffusion of transmembrane proteins between the cilia and plasma membranes. Controls cell shape and not polarization of cells during convergent extension. This chain is Septin-2A (sept2-a), found in Xenopus laevis (African clawed frog).